The primary structure comprises 215 residues: Large ribosomal subunit protein uL4 (215 aa).

Positions 46-72 (TAKSKNRAEVSGGGRKPWAQKGGGRAR) are disordered. Residues 56–71 (SGGGRKPWAQKGGGRA) show a composition bias toward gly residues.

Belongs to the universal ribosomal protein uL4 family. As to quaternary structure, part of the 50S ribosomal subunit.

One of the primary rRNA binding proteins, this protein initially binds near the 5'-end of the 23S rRNA. It is important during the early stages of 50S assembly. It makes multiple contacts with different domains of the 23S rRNA in the assembled 50S subunit and ribosome. Functionally, forms part of the polypeptide exit tunnel. This is Large ribosomal subunit protein uL4 from Helicobacter pylori (strain G27).